A 456-amino-acid polypeptide reads, in one-letter code: Shufflon protein D' (456 aa).

The interval 1–361 (MKKYDRGWAS…TGAILSCQSG (361 aa)) is constant region. Residues 362 to 456 (TWRKSNSGST…KCSYVVACQN (95 aa)) form a variable region region.

In Escherichia coli, this protein is Shufflon protein D'.